The chain runs to 142 residues: Large ribosomal subunit protein uL13 (142 aa).

Belongs to the universal ribosomal protein uL13 family. As to quaternary structure, part of the 50S ribosomal subunit.

Its function is as follows. This protein is one of the early assembly proteins of the 50S ribosomal subunit, although it is not seen to bind rRNA by itself. It is important during the early stages of 50S assembly. The chain is Large ribosomal subunit protein uL13 from Francisella philomiragia subsp. philomiragia (strain ATCC 25017 / CCUG 19701 / FSC 153 / O#319-036).